The primary structure comprises 296 residues: Putative F-box protein At1g67623 (296 aa).

One can recognise an F-box domain in the interval 21-70; the sequence is SLCLDSLPEDLLVEISSCTGASSLSAVRNLRLVSKSFRRICDEKYVFYRL.

This is Putative F-box protein At1g67623 from Arabidopsis thaliana (Mouse-ear cress).